The following is an 840-amino-acid chain: Protein argonaute-2 (840 aa).

A PAZ domain is found at 210-329; sequence PVIEFVCEVL…LPLEVCNIVA (120 aa). Serine 368 bears the Phosphoserine mark. The region spanning 498-799 is the Piwi domain; sequence LVVVILPGKT…VAFRARYHLV (302 aa). The a divalent metal cation site is built by aspartate 578 and aspartate 650. At proline 681 the chain carries 4-hydroxyproline. Histidine 788 lines the a divalent metal cation pocket. 4 positions are modified to phosphoserine: serine 805, serine 809, serine 812, and serine 815.

The protein belongs to the argonaute family. Ago subfamily. In terms of assembly, interacts with DICER1 through its Piwi domain and with TARBP2 during assembly of the RNA-induced silencing complex (RISC). Together, DICER1, AGO2 and TARBP2 constitute the trimeric RISC loading complex (RLC), or micro-RNA (miRNA) loading complex (miRLC). Within the RLC/miRLC, DICER1 and TARBP2 are required to process precursor miRNAs (pre-miRNAs) to mature miRNAs and then load them onto AGO2. AGO2 bound to the mature miRNA constitutes the minimal RISC and may subsequently dissociate from DICER1 and TARBP2. Note however that the term RISC has also been used to describe the trimeric RLC/miRLC. The formation of RISC complexes containing siRNAs rather than miRNAs appears to occur independently of DICER1. Interacts with AGO1. Also interacts with DDB1, DDX5, DDX6, DDX20, DHX30, DHX36, DDX47, DHX9, ELAVL, FXR1, GEMIN4, HNRNPF, IGF2BP1, ILF3, IMP8, MATR3, PABPC1, PRMT5, P4HA1, P4HB, RBM4, SART3, TNRC6A, TNRC6B, UPF1 and YBX1. Interacts with the P-body components DCP1A and XRN1. Associates with polysomes and messenger ribonucleoproteins (mNRPs). Interacts with RBM4; the interaction is modulated under stress-induced conditions, occurs under both cell proliferation and differentiation conditions and in an RNA- and phosphorylation-independent manner. Interacts with LIMD1, WTIP and AJUBA. Interacts with TRIM71; the interaction increases in presence of RNA. Interacts with APOBEC3G in an RNA-dependent manner. Interacts with APOBEC3A, APOBEC3C, APOBEC3F and APOBEC3H. Interacts with DICER1, TARBP2, EIF6, MOV10 and RPL7A (60S ribosome subunit); they form a large RNA-induced silencing complex (RISC). Interacts with FMR1. Interacts with ZFP36. Interacts with RC3H1; the interaction is RNA independent. Found in a complex composed of AGO2, CHD7 and ARB2A. Interacts with SND1 and SYT11. Interacts with CLNK. Interacts with GARRE1. In terms of processing, hydroxylated. 4-hydroxylation appears to enhance protein stability but is not required for miRNA-binding or endonuclease activity. Ubiquitinated on surface-exposed lysines by a SCF-like E3 ubiquitin-protein ligase complex containing ZSWIM8 during target-directed microRNA degradation (TDMD), a process that mediates degradation of microRNAs (miRNAs). Ubiquitination by the SCF-like E3 ubiquitin-protein ligase complex containing ZSWIM8 leads to its subsequent degradation, thereby exposing miRNAs for degradation. ZSWIM8 recognizes and binds AGO2 when it is engaged with a TDMD target. Post-translationally, phosphorylation at Ser-368 by AKT3; leads to up-regulate translational repression of microRNA target and down-regulate endonucleolytic cleavage. In terms of processing, a phosphorylation cycle of C-terminal serine cluster (Ser-805-Ser-815) regulates the release of target mRNAs. Target-binding leads to phosphorylation of these residues by CSNK1A1, which reduces the affinity of AGO2 for mRNA and enables target release. The ANKRD52-PPP6C phosphatase complex dephosphorylates the residues, which primes AGO2 for binding a new target.

It localises to the cytoplasm. The protein localises to the P-body. Its subcellular location is the nucleus. The catalysed reaction is Endonucleolytic cleavage to 5'-phosphomonoester.. Required for RNA-mediated gene silencing (RNAi) by the RNA-induced silencing complex (RISC). The 'minimal RISC' appears to include AGO2 bound to a short guide RNA such as a microRNA (miRNA) or short interfering RNA (siRNA). These guide RNAs direct RISC to complementary mRNAs that are targets for RISC-mediated gene silencing. The precise mechanism of gene silencing depends on the degree of complementarity between the miRNA or siRNA and its target. Binding of RISC to a perfectly complementary mRNA generally results in silencing due to endonucleolytic cleavage of the mRNA specifically by AGO2. Binding of RISC to a partially complementary mRNA results in silencing through inhibition of translation, and this is independent of endonuclease activity. May inhibit translation initiation by binding to the 7-methylguanosine cap, thereby preventing the recruitment of the translation initiation factor eIF4-E. May also inhibit translation initiation via interaction with EIF6, which itself binds to the 60S ribosomal subunit and prevents its association with the 40S ribosomal subunit. The inhibition of translational initiation leads to the accumulation of the affected mRNA in cytoplasmic processing bodies (P-bodies), where mRNA degradation may subsequently occur. In some cases RISC-mediated translational repression is also observed for miRNAs that perfectly match the 3' untranslated region (3'-UTR). Can also up-regulate the translation of specific mRNAs under certain growth conditions. Binds to the AU element of the 3'-UTR of the TNF (TNF-alpha) mRNA and up-regulates translation under conditions of serum starvation. Also required for transcriptional gene silencing (TGS), in which short RNAs known as antigene RNAs or agRNAs direct the transcriptional repression of complementary promoter regions. This Oryctolagus cuniculus (Rabbit) protein is Protein argonaute-2 (AGO2).